The chain runs to 368 residues: Cyanide hydratase (368 aa).

The 280-residue stretch at 6-285 folds into the CN hydrolase domain; sequence YKAAVVTSEP…DGLMYVDIDL (280 aa). Glu-46 functions as the Proton acceptor in the catalytic mechanism. Lys-128 is an active-site residue. Cys-163 acts as the Nucleophile in catalysis. The disordered stretch occupies residues 341–368; sequence LDRPLEEEDYRQGTDAGETEKASSNGHA.

It belongs to the carbon-nitrogen hydrolase superfamily. Nitrilase family. As to quaternary structure, oligomer of dimers, forming left-handed helical fibers.

The enzyme catalyses formamide = hydrogen cyanide + H2O. In terms of biological role, catalyzes the hydration of cyanide to formamide. Degradation of cyanide may be important for plant pathogenic fungi in infection of cyanogenic plants. This Microdochium sorghi (Zonate leaf spot disease fungus) protein is Cyanide hydratase.